The sequence spans 138 residues: Small ribosomal subunit protein bS6 (138 aa).

The span at 97-121 (TEQSEMLKAEENRSERRERRDRPDN) shows a compositional bias: basic and acidic residues. The segment at 97–138 (TEQSEMLKAEENRSERRERRDRPDNTDGSNENDSDSDNNADE) is disordered. Residues 126–138 (NENDSDSDNNADE) show a composition bias toward acidic residues.

This sequence belongs to the bacterial ribosomal protein bS6 family.

Its function is as follows. Binds together with bS18 to 16S ribosomal RNA. The sequence is that of Small ribosomal subunit protein bS6 from Stutzerimonas stutzeri (strain A1501) (Pseudomonas stutzeri).